Consider the following 731-residue polypeptide: 1,4-alpha-glucan branching enzyme GlgB 2 (731 aa).

D410 serves as the catalytic Nucleophile. Catalysis depends on E463, which acts as the Proton donor.

This sequence belongs to the glycosyl hydrolase 13 family. GlgB subfamily. In terms of assembly, monomer.

It catalyses the reaction Transfers a segment of a (1-&gt;4)-alpha-D-glucan chain to a primary hydroxy group in a similar glucan chain.. It participates in glycan biosynthesis; glycogen biosynthesis. In terms of biological role, catalyzes the formation of the alpha-1,6-glucosidic linkages in glycogen by scission of a 1,4-alpha-linked oligosaccharide from growing alpha-1,4-glucan chains and the subsequent attachment of the oligosaccharide to the alpha-1,6 position. This chain is 1,4-alpha-glucan branching enzyme GlgB 2, found in Xanthomonas oryzae pv. oryzae (strain MAFF 311018).